The following is a 102-amino-acid chain: Large ribosomal subunit protein bL36m (102 aa).

It belongs to the bacterial ribosomal protein bL36 family. In terms of assembly, component of the mitochondrial ribosome large subunit (39S) which comprises a 16S rRNA and about 50 distinct proteins.

The protein localises to the mitochondrion. The sequence is that of Large ribosomal subunit protein bL36m (Mrpl36) from Mus musculus (Mouse).